The following is a 510-amino-acid chain: Chorion transcription factor Cf2 (510 aa).

Over residues 1–10 the composition is skewed to polar residues; that stretch reads MIKSTTNPQE. The tract at residues 1–40 is disordered; sequence MIKSTTNPQEQRLPRPEDQSPAPPPPPPSSATTSTAAPAT. Low complexity predominate over residues 30 to 40; it reads SATTSTAAPAT. 2 C2H2-type zinc fingers span residues 74 to 97 and 125 to 148; these read HYCP…QLCH and HPCF…RLAH. Residues 222 to 237 show a composition bias toward basic and acidic residues; that stretch reads PEEQHHQQQLQAEHHH. Positions 222 to 279 are disordered; that stretch reads PEEQHHQQQLQAEHHHQQQHQQQQQQQQQQQELLEQQQREMQEQAQQQQVHHHQQDQD. A compositionally biased stretch (low complexity) spans 240 to 257; sequence QHQQQQQQQQQQQELLEQ. 5 consecutive C2H2-type zinc fingers follow at residues 366 to 388, 401 to 423, 429 to 451, 457 to 479, and 485 to 508; these read HKCP…RKIH, YTCS…TRIH, FRCG…LTTH, FHCG…IRTH, and YTCP…TKLH.

Isoform I is found in embryos, pupae and adult somatic tissue; isoform II occurs in embryos, pupae, ovaries, testis and to a lesser extent in adult somatic tissue.

The protein localises to the nucleus. Transcriptional regulator; binds to the promoter region of Cp15. Also binds to its own promoter, thus having a probable autoregulatory role. The sequence is that of Chorion transcription factor Cf2 (Cf2) from Drosophila melanogaster (Fruit fly).